The primary structure comprises 507 residues: ATP synthase subunit alpha, chloroplastic (507 aa).

170 to 177 (GDRQTGKT) serves as a coordination point for ATP.

This sequence belongs to the ATPase alpha/beta chains family. In terms of assembly, F-type ATPases have 2 components, CF(1) - the catalytic core - and CF(0) - the membrane proton channel. CF(1) has five subunits: alpha(3), beta(3), gamma(1), delta(1), epsilon(1). CF(0) has four main subunits: a, b, b' and c.

It is found in the plastid. Its subcellular location is the chloroplast thylakoid membrane. The catalysed reaction is ATP + H2O + 4 H(+)(in) = ADP + phosphate + 5 H(+)(out). Functionally, produces ATP from ADP in the presence of a proton gradient across the membrane. The alpha chain is a regulatory subunit. This is ATP synthase subunit alpha, chloroplastic from Pelargonium hortorum (Common geranium).